The sequence spans 244 residues: NH(3)-dependent NAD(+) synthetase (244 aa).

Residue 29–36 (GISGGIDS) participates in ATP binding. D35 contacts Mg(2+). A deamido-NAD(+)-binding site is contributed by R113. T133 serves as a coordination point for ATP. Residue E138 coordinates Mg(2+). Residues K146 and D153 each contribute to the deamido-NAD(+) site. Residues K162 and T184 each contribute to the ATP site. 230 to 231 (HK) contributes to the deamido-NAD(+) binding site.

This sequence belongs to the NAD synthetase family. In terms of assembly, homodimer.

The catalysed reaction is deamido-NAD(+) + NH4(+) + ATP = AMP + diphosphate + NAD(+) + H(+). Its pathway is cofactor biosynthesis; NAD(+) biosynthesis; NAD(+) from deamido-NAD(+) (ammonia route): step 1/1. In terms of biological role, catalyzes the ATP-dependent amidation of deamido-NAD to form NAD. Uses ammonia as a nitrogen source. This Mesoplasma florum (strain ATCC 33453 / NBRC 100688 / NCTC 11704 / L1) (Acholeplasma florum) protein is NH(3)-dependent NAD(+) synthetase.